Consider the following 223-residue polypeptide: MRLVIARCSVDYAGRLTAHLPSAPRLILVKADGSVSIHADDRAYKPLNWMSPPCALKEGTGEEEGVWTVVNKAGEKLIITMEEILHDSSHELGVDPGLIKDGVEAHLQELLADRIDTLGEGYTLIRREYMTAIGPVDILCRDAQGGTVAVEIKRRGEIDGVEQLTRYLELLNRDPHLAPVRGVFAAQEIKPQARVLATDRGIGCQVLDYDALRGIEDDKLRLF.

It belongs to the NucS endonuclease family.

It localises to the cytoplasm. Cleaves both 3' and 5' ssDNA extremities of branched DNA structures. In Streptomyces coelicolor (strain ATCC BAA-471 / A3(2) / M145), this protein is Endonuclease NucS.